A 189-amino-acid polypeptide reads, in one-letter code: Protein GrpE (189 aa).

The disordered stretch occupies residues 1–22 (MKEQQKETEQNIEEINDETVTE). A compositionally biased stretch (acidic residues) spans 10 to 22 (QNIEEINDETVTE).

This sequence belongs to the GrpE family. Homodimer.

It is found in the cytoplasm. Its function is as follows. Participates actively in the response to hyperosmotic and heat shock by preventing the aggregation of stress-denatured proteins, in association with DnaK and GrpE. It is the nucleotide exchange factor for DnaK and may function as a thermosensor. Unfolded proteins bind initially to DnaJ; upon interaction with the DnaJ-bound protein, DnaK hydrolyzes its bound ATP, resulting in the formation of a stable complex. GrpE releases ADP from DnaK; ATP binding to DnaK triggers the release of the substrate protein, thus completing the reaction cycle. Several rounds of ATP-dependent interactions between DnaJ, DnaK and GrpE are required for fully efficient folding. The polypeptide is Protein GrpE (Leuconostoc citreum (strain KM20)).